Here is a 154-residue protein sequence, read N- to C-terminus: Transmembrane protein 35B (154 aa).

Residues 1–22 (MALLLSVLRVLLGGFFALVGLA) form the signal peptide. The next 3 membrane-spanning stretches (helical) occupy residues 63-83 (IAVG…PPML), 85-105 (EISN…LAAL), and 112-132 (CIPA…QLLA).

Belongs to the DoxX family.

The protein resides in the membrane. The polypeptide is Transmembrane protein 35B (Homo sapiens (Human)).